A 282-amino-acid polypeptide reads, in one-letter code: Aminoglycoside 6-adenylyltransferase (282 aa).

The catalysed reaction is streptomycin + ATP = 6-O-adenylylstreptomycin + diphosphate. Its function is as follows. Required for streptomycin resistance. Adenylates streptomycin on the O-6 residue. The sequence is that of Aminoglycoside 6-adenylyltransferase from Staphylococcus aureus.